Here is a 165-residue protein sequence, read N- to C-terminus: UPF0303 protein Bcenmc03_1534 (165 aa).

The protein belongs to the UPF0303 family.

This is UPF0303 protein Bcenmc03_1534 from Burkholderia orbicola (strain MC0-3).